The following is a 285-amino-acid chain: uncharacterized protein (285 aa).

Residues 184-282 form the HTH araC/xylS-type domain; sequence HSICNWVQDN…GLTPGEYSAR (99 aa). 2 consecutive DNA-binding regions (H-T-H motif) follow at residues 201–222 and 249–272; these read ESVA…AQHG and IHEV…RRQF.

This is an uncharacterized protein from Escherichia coli (strain K12).